The following is a 511-amino-acid chain: Zinc finger CCCH-type with G patch domain-containing protein (511 aa).

M1 is subject to N-acetylmethionine. S70 is subject to Phosphoserine. The disordered stretch occupies residues 92–129; that stretch reads PGAPCNDSETAPGSEVQPGSTSSALEEEEEDPDLEELS. Positions 98-115 are enriched in polar residues; that stretch reads DSETAPGSEVQPGSTSSA. The segment covering 116 to 127 has biased composition (acidic residues); it reads LEEEEEDPDLEE. A C3H1-type zinc finger spans residues 174 to 200; that stretch reads KSLKPCPFFLEGKCRFKENCRFSHGQV. Residues 266–291 form a disordered region; it reads PPLRTEATESSDSDTGDASDSSYARV. The residue at position 276 (S276) is a Phosphoserine. T280 is modified (phosphothreonine). One can recognise a G-patch domain in the interval 313 to 359; it reads TRGIGSKLLVKMGYEFGKGLGRHAEGRVEPIHAVVLPRGKSLDQCAE. S353 is subject to Phosphoserine. Disordered stretches follow at residues 363-393 and 490-511; these read KKTK…PPRN and AQEA…MTEF. A compositionally biased stretch (basic and acidic residues) spans 491-511; sequence QEADLQRKQRKADTHRKMTEF.

Interacts with CHD4/Mi-2; the interaction is direct.

Its subcellular location is the nucleus. Functionally, transcription repressor that specifically binds the 5'-GGAG[GA]A[GA]A-3' consensus sequence. Represses transcription by recruiting the chromatin multiprotein complex NuRD to target promoters. Negatively regulates expression of EGFR, a gene involved in cell proliferation, survival and migration. Its ability to repress genes of the EGFR pathway suggest it may act as a tumor suppressor. The polypeptide is Zinc finger CCCH-type with G patch domain-containing protein (Zgpat) (Mus musculus (Mouse)).